A 346-amino-acid polypeptide reads, in one-letter code: Very-long-chain 3-oxoacyl-CoA reductase (346 aa).

A helical membrane pass occupies residues 26 to 46 (SAYFLLAAGSLFVASRALTFV). NADP(+) is bound by residues Val71, Asp126, Asp134, Asn153, Tyr220, Lys224, Ile253, and Ser255. Residue Tyr220 is the Proton donor of the active site. Lys224 functions as the Lowers pKa of active site Tyr in the catalytic mechanism.

Belongs to the short-chain dehydrogenases/reductases (SDR) family.

Its subcellular location is the endoplasmic reticulum membrane. The catalysed reaction is a very-long-chain (3R)-3-hydroxyacyl-CoA + NADP(+) = a very-long-chain 3-oxoacyl-CoA + NADPH + H(+). It participates in lipid metabolism; fatty acid biosynthesis. Functionally, component of the microsomal membrane bound fatty acid elongation system, which produces the 26-carbon very long-chain fatty acids (VLCFA) from palmitate. Catalyzes the reduction of the 3-ketoacyl-CoA intermediate that is formed in each cycle of fatty acid elongation. VLCFAs serve as precursors for ceramide and sphingolipids. The protein is Very-long-chain 3-oxoacyl-CoA reductase of Aspergillus oryzae (strain ATCC 42149 / RIB 40) (Yellow koji mold).